We begin with the raw amino-acid sequence, 87 residues long: Kappa 1a-bungarotoxin (87 aa).

A signal peptide spans 1–21 (MKTLLLTLVVVTIVCLDLGYT). 5 disulfide bridges follow: C24/C42, C35/C63, C48/C52, C67/C79, and C80/C85.

The protein belongs to the three-finger toxin family. Long-chain subfamily. Kappa-neurotoxin sub-subfamily. Homo- and heterodimer; non-covalently linked. Expressed by the venom gland.

Its subcellular location is the secreted. Postsynaptic neurotoxin that binds and inhibits neuronal nicotinic acetylcholine receptors (nAChR) with high affinity (IC(50)&lt;100 nM). Is a selective, and slowly reversible antagonist of alpha-3/CHRNA3-containing and some alpha-4/CHRNA4-containing AChRs. This Bungarus candidus (Malayan krait) protein is Kappa 1a-bungarotoxin.